A 179-amino-acid chain; its full sequence is Probable chemoreceptor glutamine deamidase CheD 2 (179 aa).

The protein belongs to the CheD family.

The enzyme catalyses L-glutaminyl-[protein] + H2O = L-glutamyl-[protein] + NH4(+). Functionally, probably deamidates glutamine residues to glutamate on methyl-accepting chemotaxis receptors (MCPs), playing an important role in chemotaxis. The chain is Probable chemoreceptor glutamine deamidase CheD 2 from Ruegeria sp. (strain TM1040) (Silicibacter sp.).